The chain runs to 399 residues: Tryptophan synthase beta chain (399 aa).

Lysine 92 is subject to N6-(pyridoxal phosphate)lysine.

Belongs to the TrpB family. As to quaternary structure, tetramer of two alpha and two beta chains. Requires pyridoxal 5'-phosphate as cofactor.

It catalyses the reaction (1S,2R)-1-C-(indol-3-yl)glycerol 3-phosphate + L-serine = D-glyceraldehyde 3-phosphate + L-tryptophan + H2O. It participates in amino-acid biosynthesis; L-tryptophan biosynthesis; L-tryptophan from chorismate: step 5/5. In terms of biological role, the beta subunit is responsible for the synthesis of L-tryptophan from indole and L-serine. The chain is Tryptophan synthase beta chain from Bordetella pertussis (strain Tohama I / ATCC BAA-589 / NCTC 13251).